The sequence spans 322 residues: Deoxyhypusine hydroxylase (322 aa).

2 HEAT-like PBS-type repeats span residues 76–102 (LKHE…VLAD) and 109–135 (VRHE…YFKE). Fe cation is bound by residues His78, Glu79, His111, Glu112, His236, Glu237, His269, and Glu270. The stretch at 267-293 (VRHEAAEALGSIATDDVLPVLKEHLKD) is one HEAT-like PBS-type 3 repeat.

This sequence belongs to the deoxyhypusine hydroxylase family. Requires Fe(2+) as cofactor.

It localises to the cytoplasm. It is found in the nucleus. It catalyses the reaction [eIF5A protein]-deoxyhypusine + AH2 + O2 = [eIF5A protein]-hypusine + A + H2O. Its pathway is protein modification; eIF5A hypusination. Its function is as follows. Catalyzes the hydroxylation of the N(6)-(4-aminobutyl)-L-lysine intermediate to form hypusine, an essential post-translational modification only found in mature eIF-5A factor. This chain is Deoxyhypusine hydroxylase, found in Kluyveromyces lactis (strain ATCC 8585 / CBS 2359 / DSM 70799 / NBRC 1267 / NRRL Y-1140 / WM37) (Yeast).